Reading from the N-terminus, the 335-residue chain is Ketol-acid reductoisomerase (NAD(P)(+)) (335 aa).

The region spanning 5–185 is the KARI N-terminal Rossmann domain; sequence AKIYTDKDTT…GGTRAGAIET (181 aa). NADP(+)-binding positions include 28 to 31, Arg52, Ser56, and 86 to 89; these read YGSQ and DMAQ. His111 is an active-site residue. Gly137 lines the NADP(+) pocket. Residues 186–331 form the KARI C-terminal knotted domain; sequence TFKEETETDL…RRLKEIIERG (146 aa). Positions 194, 198, 230, and 234 each coordinate Mg(2+). Ser255 contributes to the substrate binding site. The segment at 301 to 335 is disordered; it reads GSPTLSKGLEEMDKSLEEQTGRRLKEIIERGRPKS. Residues 308–335 show a composition bias toward basic and acidic residues; sequence GLEEMDKSLEEQTGRRLKEIIERGRPKS.

It belongs to the ketol-acid reductoisomerase family. The cofactor is Mg(2+).

It carries out the reaction (2R)-2,3-dihydroxy-3-methylbutanoate + NAD(+) = (2S)-2-acetolactate + NADH + H(+). The enzyme catalyses (2R)-2,3-dihydroxy-3-methylbutanoate + NADP(+) = (2S)-2-acetolactate + NADPH + H(+). Its pathway is amino-acid biosynthesis; L-isoleucine biosynthesis; L-isoleucine from 2-oxobutanoate: step 2/4. It functions in the pathway amino-acid biosynthesis; L-valine biosynthesis; L-valine from pyruvate: step 2/4. Its function is as follows. Involved in the biosynthesis of branched-chain amino acids (BCAA). Catalyzes an alkyl-migration followed by a ketol-acid reduction of (S)-2-acetolactate (S2AL) to yield (R)-2,3-dihydroxy-isovalerate. In the isomerase reaction, S2AL is rearranged via a Mg-dependent methyl migration to produce 3-hydroxy-3-methyl-2-ketobutyrate (HMKB). In the reductase reaction, this 2-ketoacid undergoes a metal-dependent reduction by NADPH or NADH to yield (R)-2,3-dihydroxy-isovalerate. The sequence is that of Ketol-acid reductoisomerase (NAD(P)(+)) from Metallosphaera sedula (strain ATCC 51363 / DSM 5348 / JCM 9185 / NBRC 15509 / TH2).